The sequence spans 208 residues: ATP phosphoribosyltransferase (208 aa).

It belongs to the ATP phosphoribosyltransferase family. Short subfamily. As to quaternary structure, heteromultimer composed of HisG and HisZ subunits.

The protein localises to the cytoplasm. The catalysed reaction is 1-(5-phospho-beta-D-ribosyl)-ATP + diphosphate = 5-phospho-alpha-D-ribose 1-diphosphate + ATP. The protein operates within amino-acid biosynthesis; L-histidine biosynthesis; L-histidine from 5-phospho-alpha-D-ribose 1-diphosphate: step 1/9. Its function is as follows. Catalyzes the condensation of ATP and 5-phosphoribose 1-diphosphate to form N'-(5'-phosphoribosyl)-ATP (PR-ATP). Has a crucial role in the pathway because the rate of histidine biosynthesis seems to be controlled primarily by regulation of HisG enzymatic activity. The sequence is that of ATP phosphoribosyltransferase (hisG) from Thermotoga maritima (strain ATCC 43589 / DSM 3109 / JCM 10099 / NBRC 100826 / MSB8).